Reading from the N-terminus, the 241-residue chain is tRNA pseudouridine synthase B (241 aa).

The active-site Nucleophile is Asp45.

Belongs to the pseudouridine synthase TruB family. Type 1 subfamily.

It catalyses the reaction uridine(55) in tRNA = pseudouridine(55) in tRNA. Responsible for synthesis of pseudouridine from uracil-55 in the psi GC loop of transfer RNAs. In Chlamydia muridarum (strain MoPn / Nigg), this protein is tRNA pseudouridine synthase B.